The primary structure comprises 567 residues: Oxygen-dependent choline dehydrogenase (567 aa).

Residue 6–35 (DYIIVGAGSAGNTLATRLTEDEGVTVLLLE) coordinates FAD. The Proton acceptor role is filled by His475.

This sequence belongs to the GMC oxidoreductase family. The cofactor is FAD.

The enzyme catalyses choline + A = betaine aldehyde + AH2. It catalyses the reaction betaine aldehyde + NAD(+) + H2O = glycine betaine + NADH + 2 H(+). It functions in the pathway amine and polyamine biosynthesis; betaine biosynthesis via choline pathway; betaine aldehyde from choline (cytochrome c reductase route): step 1/1. Its function is as follows. Involved in the biosynthesis of the osmoprotectant glycine betaine. Catalyzes the oxidation of choline to betaine aldehyde and betaine aldehyde to glycine betaine at the same rate. This Pseudomonas fluorescens (strain Pf0-1) protein is Oxygen-dependent choline dehydrogenase.